Consider the following 146-residue polypeptide: Large ribosomal subunit protein bL17 (146 aa).

A compositionally biased stretch (low complexity) spans 124-134 (EASRATRAAAS). Residues 124–146 (EASRATRAAASKKAEEEAASEAE) form a disordered region.

This sequence belongs to the bacterial ribosomal protein bL17 family. As to quaternary structure, part of the 50S ribosomal subunit. Contacts protein L32.

In Corynebacterium kroppenstedtii (strain DSM 44385 / JCM 11950 / CIP 105744 / CCUG 35717), this protein is Large ribosomal subunit protein bL17.